Consider the following 121-residue polypeptide: uncharacterized protein (121 aa).

The tract at residues 20 to 98 (NEVRTSQSEV…PYYHGSKAST (79 aa)) is disordered. Residues 35-51 (KKSDNGEKDEKEEKELN) show a composition bias toward basic and acidic residues.

This is an uncharacterized protein from Invertebrate iridescent virus 6 (IIV-6).